The sequence spans 336 residues: MGADIGDLFEREEVELEYFSGKKIAVDAFNTLYQFISIIRQPDGTPLKDSQGRITSHLSGILYRVSNMVEVGIRPVFVFDGEPPEFKKAEIEERKKRRAEAEEMWIAALQAGDKDAKKYAQAAGRVDEYIVDSAKTLLSYMGIPFVDAPSEGEAQAAYMAAKGDVEYTGSQDYDSLLFGSPRLARNLAITGKRKLPGKNVYVDVKPEIIILESNLKRLGLTREQLIDIAILVGTDYNEGVKGVGVKKALNYIKTYGDIFRALKALKVNIDHVEEIRNFFLNPPVTDDYRIEFREPDFEKAIEFLCEEHDFSRERVEKALEKLKALKSTQATLERWF.

An N-domain region spans residues Met-1–Arg-98. Asp-27, Asp-80, Glu-151, Glu-153, Asp-172, Asp-174, and Asp-235 together coordinate Mg(2+). The interval Asp-115 to Gly-256 is I-domain. Residues Thr-328–Phe-336 are interaction with PCNA.

It belongs to the XPG/RAD2 endonuclease family. FEN1 subfamily. As to quaternary structure, interacts with PCNA. PCNA stimulates the nuclease activity without altering cleavage specificity. Mg(2+) serves as cofactor.

Its function is as follows. Structure-specific nuclease with 5'-flap endonuclease and 5'-3' exonuclease activities involved in DNA replication and repair. During DNA replication, cleaves the 5'-overhanging flap structure that is generated by displacement synthesis when DNA polymerase encounters the 5'-end of a downstream Okazaki fragment. Binds the unpaired 3'-DNA end and kinks the DNA to facilitate 5' cleavage specificity. Cleaves one nucleotide into the double-stranded DNA from the junction in flap DNA, leaving a nick for ligation. Also involved in the base excision repair (BER) pathway. Acts as a genome stabilization factor that prevents flaps from equilibrating into structures that lead to duplications and deletions. Also possesses 5'-3' exonuclease activity on nicked or gapped double-stranded DNA. This Archaeoglobus fulgidus (strain ATCC 49558 / DSM 4304 / JCM 9628 / NBRC 100126 / VC-16) protein is Flap endonuclease 1.